The chain runs to 162 residues: Cyclic pyranopterin monophosphate synthase (162 aa).

Substrate contacts are provided by residues 75-77 (LCH) and 113-114 (ME). Residue Asp128 is part of the active site.

This sequence belongs to the MoaC family. Homohexamer; trimer of dimers.

It catalyses the reaction (8S)-3',8-cyclo-7,8-dihydroguanosine 5'-triphosphate = cyclic pyranopterin phosphate + diphosphate. Its pathway is cofactor biosynthesis; molybdopterin biosynthesis. Its function is as follows. Catalyzes the conversion of (8S)-3',8-cyclo-7,8-dihydroguanosine 5'-triphosphate to cyclic pyranopterin monophosphate (cPMP). This is Cyclic pyranopterin monophosphate synthase from Burkholderia vietnamiensis (strain G4 / LMG 22486) (Burkholderia cepacia (strain R1808)).